The sequence spans 268 residues: MSTFVAGGNVSANGIRQHYLRYGGKGHALILVPGITSPAITWGFVAERLGHYFDTYVLDVRGRGLSSSGPDLDYGTDACAADIPAFAAALGLDSYHLLGHSMGARFAIRAAAQGAPGLQRLVLVDPPVSGPGRRAYPSKLPWYVDSIRQATVGMSGDDMRAFCATWSDEQLALRAEWLHTCYEPAIVRAFDDFHEVDIHQYLPAVRQPALLMVAGRGGVIEPRDIAEMRELKPDIQVAYVDNAGHMIPWDDLDGFFAAFGDFLDHPLV.

An AB hydrolase-1 domain is found at 28-251 (ALILVPGITS…NAGHMIPWDD (224 aa)). Active-site charge relay system residues include Ser101, Glu221, and His245.

The catalysed reaction is N-formylmaleamate + H2O = maleamate + formate + H(+). It participates in cofactor degradation; nicotinate degradation. In terms of biological role, deformylase that catalyzes the conversion of N-formylmaleamic acid to maleamate in the aerobic nicotinate degradation pathway. This is N-formylmaleamate deformylase (nicD) from Pseudomonas putida (strain ATCC 47054 / DSM 6125 / CFBP 8728 / NCIMB 11950 / KT2440).